Here is a 293-residue protein sequence, read N- to C-terminus: 2-pyrone-4,6-dicarboxylate hydrolase (293 aa).

The interval 1 to 20 is disordered; the sequence is MTNDERILSWNETPSKPRYT. Substrate is bound by residues 29–31, tyrosine 47, serine 75, arginine 122, arginine 128, tyrosine 154, and histidine 178; that span reads HCH. Aspartate 246 (proton acceptor) is an active-site residue. Asparagine 251 is a substrate binding site.

It belongs to the metallo-dependent hydrolases superfamily. PDC hydrolase family. As to quaternary structure, monomer.

It catalyses the reaction 2-oxo-2H-pyran-4,6-dicarboxylate + H2O = (1E)-4-oxobut-1-ene-1,2,4-tricarboxylate + H(+). It participates in secondary metabolite metabolism; lignin degradation. Its activity is regulated as follows. Strongly inhibited by 1 mM Zn(2+) ions. Also inhibited by pyridine-2,4-dicarboxylic acid, 5-hydroxyisophthalic acid and 5,5'-dithiobis(2-nitrobenzoic acid) (Ellman reagent). Functionally, contributes to the degradation of lignin at the level of the protocatechuate 4,5-cleavage pathway. Catalyzes the hydrolysis of 2-pyrone-4,6-dicarboxylate (PDC) to (4E)-oxalomesaconate (OMA). The keto form of OMA can tautomerize into the enol form, 4-carboxy-2-hydroxymuconate (CHM), under certain pH conditions. Also catalyzes the reverse reaction. Is essential for the growth of Sphingobium sp. SYK-6 on vanillate but is not responsible for the growth of this strain on syringate. The polypeptide is 2-pyrone-4,6-dicarboxylate hydrolase (Sphingobium sp. (strain NBRC 103272 / SYK-6)).